A 571-amino-acid chain; its full sequence is Quinone-dependent D-lactate dehydrogenase (571 aa).

Residues 44–273 (GGGPVFAVVR…FAVRTRTFPR (230 aa)) enclose the FAD-binding PCMH-type domain. Residues 78–82 (ASNTG), 86–87 (GS), Gly145, Ser152, Gly162, and Val263 contribute to the FAD site.

The protein belongs to the quinone-dependent D-lactate dehydrogenase family. FAD serves as cofactor.

It localises to the cell membrane. The enzyme catalyses (R)-lactate + a quinone = a quinol + pyruvate. In terms of biological role, catalyzes the oxidation of D-lactate to pyruvate. Also has weak activity with L-lactate and DL-2-hydroxybutyrate. Electrons derived from D-lactate oxidation enter the electron transport chain. Essential for growth with D-lactate as sole carbon and energy source. This is Quinone-dependent D-lactate dehydrogenase from Corynebacterium glutamicum (strain ATCC 13032 / DSM 20300 / JCM 1318 / BCRC 11384 / CCUG 27702 / LMG 3730 / NBRC 12168 / NCIMB 10025 / NRRL B-2784 / 534).